Here is a 414-residue protein sequence, read N- to C-terminus: Apolipoprotein N-acyltransferase (414 aa).

The next 6 helical transmembrane spans lie at 19 to 39 (GIAL…HFGI), 40 to 60 (TSPL…LKLP), 63 to 83 (SGFA…ALSF), 91 to 111 (LIPF…SMAL), 121 to 141 (LLLW…VPEV), and 153 to 173 (LSFG…QRWL). The 213-residue stretch at 202 to 414 (IETHIPQEIR…NRSPSGIIAP (213 aa)) folds into the CN hydrolase domain. Residue Glu-243 is the Proton acceptor of the active site. Lys-298 is a catalytic residue. Cys-351 acts as the Nucleophile in catalysis.

This sequence belongs to the CN hydrolase family. Apolipoprotein N-acyltransferase subfamily.

The protein localises to the cell inner membrane. It catalyses the reaction N-terminal S-1,2-diacyl-sn-glyceryl-L-cysteinyl-[lipoprotein] + a glycerophospholipid = N-acyl-S-1,2-diacyl-sn-glyceryl-L-cysteinyl-[lipoprotein] + a 2-acyl-sn-glycero-3-phospholipid + H(+). It participates in protein modification; lipoprotein biosynthesis (N-acyl transfer). Catalyzes the phospholipid dependent N-acylation of the N-terminal cysteine of apolipoprotein, the last step in lipoprotein maturation. In Wolinella succinogenes (strain ATCC 29543 / DSM 1740 / CCUG 13145 / JCM 31913 / LMG 7466 / NCTC 11488 / FDC 602W) (Vibrio succinogenes), this protein is Apolipoprotein N-acyltransferase.